We begin with the raw amino-acid sequence, 174 residues long: Achaete-scute homolog 3 (174 aa).

A basic motif region spans residues 92–105 (AFIRKRNERERQRV). The bHLH domain maps to 92–144 (AFIRKRNERERQRVKCVNEGYARLRRHLPEDYLEKRLSKVETLRAAIKYISYL). The interval 106–144 (KCVNEGYARLRRHLPEDYLEKRLSKVETLRAAIKYISYL) is helix-loop-helix motif. The interval 153-174 (SETKKNPRTASCGSLDPALRVI) is disordered.

In terms of assembly, efficient DNA binding requires dimerization with another bHLH protein. Expressed in the salivary duct cells. Also expressed at lower levels in testis and epididymis. Expressed in the olfactory epithelium (OE), in a subset of apical microvillar cells.

It localises to the nucleus. In terms of biological role, transcriptional repressor. Inhibits myogenesis. Plays a role in progenitor cells which differentiate into ductal and acinar, but not myoepithelial, cell lineages in the salivary glands. Involved in the functions of the microvillar cells and Bowman's glands and probably, in a non-cell-autonomous manner, in the development or regeneration of a complete olfactory epithelium (OE). This chain is Achaete-scute homolog 3 (Ascl3), found in Mus musculus (Mouse).